Consider the following 589-residue polypeptide: Ectoderm-neural cortex protein 1 (589 aa).

A BTB domain is found at 46 to 114 (TDVLLHAGNR…AYSSRVIINE (69 aa)). Kelch repeat units lie at residues 296-340 (ALFL…AIGC), 341-388 (KVYI…ELKH), 389-444 (CLYV…SAKL), 446-492 (LFAF…VLGN), 494-538 (IFIM…ASGN), and 539-585 (KLYV…STWK).

In terms of assembly, binds to RB1. Hypophosphorylated RB1 associates with ENC1 during neuronal differentiation, while hyperphosphorylated RB1 associates with ENC1 in undifferentiating cells. Part of a complex that contains CUL3, RBX1 and ENC1. Interacts indirectly with KEAP1. Post-translationally, ubiquitinated by E3 ubiquitin ligase complex formed by CUL3 and RBX1 and probably targeted for proteasome-independent degradation. Quinone-induced oxidative stress increases its ubiquitination. Detected in fetal brain tissue, moderate expression in fetal heart, lung and kidney. Highly expressed in adult brain, particularly high in the hippocampus and amygdala, and spinal cord. Detectable in adult pancreas. May be down-regulated in neuroblastoma tumors.

The protein localises to the nucleus matrix. The protein resides in the cytoplasm. It is found in the cytoskeleton. In terms of biological role, actin-binding protein involved in the regulation of neuronal process formation and in differentiation of neural crest cells. Down-regulates transcription factor NF2L2/NRF2 by decreasing the rate of protein synthesis and not via a ubiquitin-mediated proteasomal degradation mechanism. The chain is Ectoderm-neural cortex protein 1 (ENC1) from Homo sapiens (Human).